The chain runs to 325 residues: Clavaminate synthase 2 (325 aa).

Residues H145, E147, and H280 each coordinate Fe cation. Residue R294 coordinates 2-oxoglutarate.

Belongs to the clavaminate synthase family. Requires Fe(2+) as cofactor.

The enzyme catalyses deoxyamidinoproclavaminate + 2-oxoglutarate + O2 = amidinoproclavaminate + succinate + CO2. It catalyses the reaction proclavaminate + 2-oxoglutarate + O2 = dihydroclavaminate + succinate + CO2 + H2O. The catalysed reaction is dihydroclavaminate + 2-oxoglutarate + O2 = clavaminate + succinate + CO2 + H2O. The protein operates within antibiotic biosynthesis; clavulanate biosynthesis; clavulanate from D-glyceraldehyde 3-phosphate and L-arginine: step 3/8. Its pathway is antibiotic biosynthesis; clavulanate biosynthesis; clavulanate from D-glyceraldehyde 3-phosphate and L-arginine: step 5/8. It functions in the pathway antibiotic biosynthesis; clavulanate biosynthesis; clavulanate from D-glyceraldehyde 3-phosphate and L-arginine: step 6/8. In Streptomyces clavuligerus, this protein is Clavaminate synthase 2 (cs2).